The chain runs to 502 residues: Lysine--tRNA ligase (502 aa).

2 residues coordinate Mg(2+): E409 and E416.

The protein belongs to the class-II aminoacyl-tRNA synthetase family. In terms of assembly, homodimer. Requires Mg(2+) as cofactor.

It localises to the cytoplasm. It catalyses the reaction tRNA(Lys) + L-lysine + ATP = L-lysyl-tRNA(Lys) + AMP + diphosphate. In Prochlorococcus marinus (strain SARG / CCMP1375 / SS120), this protein is Lysine--tRNA ligase.